A 172-amino-acid chain; its full sequence is Cell division protein SepF (172 aa).

The interval 18 to 73 (RRYDEEDLPDEELTTEVYSDDGYEPSSEVTQLHHHDSNEQHARGHKAVQHRRRSEL) is disordered. Residues 22 to 40 (EEDLPDEELTTEVYSDDGY) are compositionally biased toward acidic residues. A compositionally biased stretch (basic and acidic residues) spans 48–59 (QLHHHDSNEQHA). Residues 60-70 (RGHKAVQHRRR) show a composition bias toward basic residues.

The protein belongs to the SepF family. In terms of assembly, homodimer. Interacts with FtsZ.

The protein localises to the cytoplasm. Functionally, cell division protein that is part of the divisome complex and is recruited early to the Z-ring. Probably stimulates Z-ring formation, perhaps through the cross-linking of FtsZ protofilaments. Its function overlaps with FtsA. The protein is Cell division protein SepF of Cutibacterium acnes (strain DSM 16379 / KPA171202) (Propionibacterium acnes).